Reading from the N-terminus, the 48-residue chain is M-oxotoxin-Ot1a (48 aa).

Expressed by the venom gland.

It localises to the secreted. Its subcellular location is the target cell membrane. Its function is as follows. Disrupts cell membranes, particularly those rich in phosphocholine, through formation of pores. Has antimicrobial activity against Gram-negative bacterium E.coli, Gram-positive bacteria B.subtilis and S.aureus, and hemolytic activity against sheep, pig and guinea pig erythrocytes. Has insecticidal activity against S.frugiperda ovarian cells by opening non-selective ion channels. Enhances the insecticidal activity of spider venom neurotoxic peptides. The polypeptide is M-oxotoxin-Ot1a (Oxyopes takobius (Lynx spider)).